The sequence spans 468 residues: Probable citrate synthase, mitochondrial (468 aa).

Catalysis depends on residues H303, H349, and D404.

The protein belongs to the citrate synthase family. Homodimer.

The protein localises to the mitochondrion matrix. It catalyses the reaction oxaloacetate + acetyl-CoA + H2O = citrate + CoA + H(+). Its pathway is carbohydrate metabolism; tricarboxylic acid cycle; isocitrate from oxaloacetate: step 1/2. The sequence is that of Probable citrate synthase, mitochondrial (cts-1) from Caenorhabditis elegans.